The chain runs to 279 residues: Fatty-acid-binding protein 1 (279 aa).

The dodecanoate site is built by R103, Y116, and S183.

It belongs to the chalcone isomerase family. Expressed in developing cotyledons, young seedlings, roots, seeds, embryos, macrospores, preanthesis and tapetum. Restricted to developing and reproductive tissues.

The protein localises to the plastid. Its subcellular location is the chloroplast stroma. Its function is as follows. Fatty-acid-binding protein. Interacts preferentially with saturated fatty acid. May be involved in alpha-linolenic (C18:3) metabolism. This Arabidopsis thaliana (Mouse-ear cress) protein is Fatty-acid-binding protein 1 (FAP1).